The following is a 985-amino-acid chain: Regulator of telomere elongation helicase 1 homolog (985 aa).

A Helicase ATP-binding domain is found at 7–303; that stretch reads AGIPVHFPFE…QDMAGDEPKD (297 aa). 42–49 lines the ATP pocket; that stretch reads SPTGTGKT. The [4Fe-4S] cluster site is built by C146, C164, C173, and C209. The DEAH box signature appears at 252-255; it reads DEAH. The interval 863 to 883 is disordered; that stretch reads VKIHKRERSSPTAPESSSQVT. Positions 872-882 are enriched in polar residues; that stretch reads SPTAPESSSQV. T874 bears the Phosphothreonine mark.

This sequence belongs to the helicase family. RAD3/XPD subfamily. In terms of tissue distribution, expressed in both male germline and somatic cells (at protein level). Expressed in ovarian germline stem cells (at protein level). Expressed in adult testes (at protein level). Expressed in the germarium including germline stem cells.

It is found in the nucleus. The protein localises to the chromosome. The enzyme catalyses ATP + H2O = ADP + phosphate + H(+). In terms of biological role, a probable ATP-dependent DNA helicase implicated in DNA repair and the maintenance of genomic stability. Acts as an anti-recombinase to counteract toxic recombination and limit crossover during meiosis. Regulates meiotic recombination and crossover homeostasis by physically dissociating strand invasion events and thereby promotes noncrossover repair by meiotic synthesis dependent strand annealing (SDSA) as well as disassembly of D loop recombination intermediates. In male germline stem cells (GSCs), plays a role in GSCs maintenance during larval germline development by modulating the expression of genes such as Stat92E and preventing DNA damage-induced checkpoint activation. May play a role in female germline stem cell maintenance. The protein is Regulator of telomere elongation helicase 1 homolog of Drosophila melanogaster (Fruit fly).